The chain runs to 65 residues: Lantipeptide Flvbeta.h (65 aa).

A propeptide spans 1–27 (cleaved by FlvT); sequence MERYGHLAGVIPVDEIDDMFESNVIGG. A 2,3-didehydrobutyrine; by FlvM2 modification is found at T28. The lanthionine (Ser-Cys); by FlvM2 cross-link spans 29–33; that stretch reads SSIDC. At S30 the chain carries 2,3-didehydroalanine (Ser); by FlvM2. T44 carries the post-translational modification 2,3-didehydrobutyrine; by FlvM2. Positions 48–54 form a cross-link, beta-methyllanthionine (Thr-Cys); by FlvM2; it reads TVRIEFC. Residues 56–59 constitute a cross-link (lanthionine (Ser-Cys); by FlvM2); the sequence is SAAC. A cross-link (beta-methyllanthionine (Thr-Cys); by FlvM2) is located at residues 60–63; that stretch reads TYSC.

In terms of processing, contains LL-lanthionine, DL-lanthionine, and DL-beta-methyllanthionine, when coepressed in E.coli with the flavecin synthetase FlvM2.

The protein localises to the secreted. In terms of biological role, lanthionine-containing peptide that does probably not show antibacterial activity, since its analog [+2]Flvbeta.h does not show antibacterial activity against M.luteus. Also does not show antibiotic activity when tested with [Del2]Flvalpha.a, an analog of Flvalpha.a, which is encoded by the same operon than Flvbeta.h. The bactericidal activity of lantibiotics is based on depolarization of energized bacterial cytoplasmic membranes, initiated by the formation of aqueous transmembrane pores. The polypeptide is Lantipeptide Flvbeta.h (Ruminococcus flavefaciens).